Here is a 972-residue protein sequence, read N- to C-terminus: Cycloisomaltooligosaccharide glucanotransferase (972 aa).

Residues 1–38 (MVRFMYALRKRRLSLLLAMSLLVMCVASVVSPPPQALA) form the signal peptide. CBM6 domains lie at 421–546 (TRYE…LTLG) and 748–871 (DIYE…LDLD).

Belongs to the glycosyl hydrolase 66 family. Monomer.

The enzyme catalyses cyclizes part of a (1-&gt;6)-alpha-D-glucan chain by formation of a (1-&gt;6)-alpha-D-glucosidic bond.. Functionally, produces cycloisomaltooligosaccharide from dextran containing 7, 8 or 9 glucose units. The enzyme is specific for (1-&gt;6)-alpha-D-glucans (dextrans) and, without activity toward (1-&gt;4)-alpha-D-glucans, such as amylose. It also has no activity on oligosaccharides, such as amylopectin and pullulan, containing (1-&gt;6)-alpha-D-glucosidic linkages at branch points. This Niallia circulans (Bacillus circulans) protein is Cycloisomaltooligosaccharide glucanotransferase.